The primary structure comprises 344 residues: Dihydroorotase (344 aa).

The Zn(2+) site is built by His13 and His15. Substrate is bound by residues 15-17 (HFR) and Asn41. Lys98, His135, and His173 together coordinate Zn(2+). Lys98 is modified (N6-carboxylysine). Residue His135 participates in substrate binding. Leu218 is a substrate binding site. Asp246 serves as a coordination point for Zn(2+). Residue Asp246 is part of the active site. Substrate-binding residues include His250 and Ala262.

Belongs to the metallo-dependent hydrolases superfamily. DHOase family. Class II DHOase subfamily. Homodimer. It depends on Zn(2+) as a cofactor.

It catalyses the reaction (S)-dihydroorotate + H2O = N-carbamoyl-L-aspartate + H(+). Its pathway is pyrimidine metabolism; UMP biosynthesis via de novo pathway; (S)-dihydroorotate from bicarbonate: step 3/3. Its function is as follows. Catalyzes the reversible cyclization of carbamoyl aspartate to dihydroorotate. The sequence is that of Dihydroorotase from Shewanella sediminis (strain HAW-EB3).